Consider the following 525-residue polypeptide: Beta-1,4-xylosyltransferase IRX14 (525 aa).

The Cytoplasmic portion of the chain corresponds to 1-35; the sequence is MKLSALHQSYLNRRSNSFRSPTSLDSSVDGSGKSL. Residues 36-56 form a helical; Signal-anchor for type II membrane protein membrane-spanning segment; it reads IAVFWLILHCLCCLISLVLGF. The Lumenal segment spans residues 57 to 525; that stretch reads RFSRLVFFFL…SSSSKHQERN (469 aa). Residues asparagine 102, asparagine 204, and asparagine 326 are each glycosylated (N-linked (GlcNAc...) asparagine). The disordered stretch occupies residues 452-525; that stretch reads RTPWPDVPPE…SSSSKHQERN (74 aa). Polar residues predominate over residues 471–488; that stretch reads PLSQGNTVVVIPKQQQHP. Over residues 489–503 the composition is skewed to basic residues; it reads TKIRKPKRKSKKSKH. The segment covering 508-519 has biased composition (polar residues); the sequence is TDTTTQVYSSSS.

This sequence belongs to the glycosyltransferase 43 family. In terms of tissue distribution, expressed in developing interfascicular fibers and xylem cells in stems and developing secondary xylem in roots.

Its subcellular location is the golgi apparatus membrane. It carries out the reaction [(1-&gt;4)-beta-D-xylan](n) + UDP-alpha-D-xylose = [(1-&gt;4)-beta-D-xylan](n+1) + UDP + H(+). Involved in the synthesis of the hemicellulose glucuronoxylan, a major component of secondary cell walls. Involved in the elongation of glucuronoxylan xylosyl backbone. Xylan xylosyltransferase that acts cooperatively with IRX9 to achieve the successive addition of xylosyl residues during xylan backbone elongation. Required for the proper composition and structural properties of released seed coat mucilage. Required for the production of highly branched xylan polymers in seed coat mucilage. Xylan with xylose side chains seems to be necessary for pectin attachment to the seed surface. Together with MUCI70, required for xylan and pectin synthesis in seed coat epidermal (SCE) cells. The chain is Beta-1,4-xylosyltransferase IRX14 from Arabidopsis thaliana (Mouse-ear cress).